The chain runs to 505 residues: MVNIRPDEISSIIRKQIEQYTQEVKVVNIGTVLQVGDGIARIYGLDKVMAGELLEFEDGTIGIALNLESDNVGAVLMGDGLTIQEGSSVKATGKIAQIPVSDGYLGRVVNALARPIDGKGDIASSEFRLIESPAPGIISRRSVYEPMQTGLIAIDAMIPIGRGQRELIIGDRQTGKTAVATDTILNQKGQNVICVYVAIGQKASSVAQVVNTFEERGAMDYTIVVAETANAPATLQYLAPYTGAALAEYFMYKGQHTLVVYDDLSKQAQAYRQMSLLLRRPPGREAYPGDVFYLHSRLLERAAKLGSQLGEGSMTALPIVETQAGDVSAYIPTNVISITDGQIFLSADLFNSGIRPAINVGISVSRVGSAAQIKAMKQVAGKLKLELAQFAELEAFSQFASDLDKATQNQLARGQRLRELLKQAQSAPLSVEQQVATIFTGVNGYLDVIEVSQVRSFLTQLREYIITNKPQFGEIIRSTKTFTDEAQTILKQAIQEHTEAFLLQQ.

170–177 serves as a coordination point for ATP; the sequence is GDRQTGKT.

Belongs to the ATPase alpha/beta chains family. As to quaternary structure, F-type ATPases have 2 components, CF(1) - the catalytic core - and CF(0) - the membrane proton channel. CF(1) has five subunits: alpha(3), beta(3), gamma(1), delta(1), epsilon(1). CF(0) has four main subunits: a, b, b' and c.

Its subcellular location is the plastid. The protein resides in the chloroplast thylakoid membrane. It catalyses the reaction ATP + H2O + 4 H(+)(in) = ADP + phosphate + 5 H(+)(out). Its function is as follows. Produces ATP from ADP in the presence of a proton gradient across the membrane. The alpha chain is a regulatory subunit. This Zygnema circumcarinatum (Green alga) protein is ATP synthase subunit alpha, chloroplastic.